The sequence spans 51 residues: Small ribosomal subunit protein eS31 (51 aa).

Positions 22, 25, 40, and 43 each coordinate Zn(2+). The segment at 22–43 adopts a C4-type zinc-finger fold; sequence CPRCGPGVFMADHGDRWACGRC.

It belongs to the eukaryotic ribosomal protein eS31 family. Part of the 30S ribosomal subunit. It depends on Zn(2+) as a cofactor.

The polypeptide is Small ribosomal subunit protein eS31 (Pyrococcus abyssi (strain GE5 / Orsay)).